The following is a 169-amino-acid chain: Ubiquitin-fold modifier-conjugating enzyme 1 (169 aa).

Catalysis depends on cysteine 116, which acts as the Glycyl thioester intermediate.

This sequence belongs to the ubiquitin-conjugating enzyme family. UFC1 subfamily.

E2-like enzyme which forms an intermediate with UFM1 via a thioester linkage. The protein is Ubiquitin-fold modifier-conjugating enzyme 1 of Nematostella vectensis (Starlet sea anemone).